Consider the following 138-residue polypeptide: Eukaryotic translation initiation factor 1A (138 aa).

A compositionally biased stretch (basic residues) spans 1–15; that stretch reads MPKNKGKGGKNRRRG. The interval 1-28 is disordered; that stretch reads MPKNKGKGGKNRRRGKNENENEKRELTY. Basic and acidic residues predominate over residues 16-27; the sequence is KNENENEKRELT. One can recognise an S1-like domain in the interval 22 to 96; sequence EKRELTYAEE…EKGDVILKYT (75 aa).

This sequence belongs to the eIF-1A family.

Functionally, seems to be required for maximal rate of protein biosynthesis. Enhances ribosome dissociation into subunits and stabilizes the binding of the initiator Met-tRNA(I) to 40 S ribosomal subunits. The sequence is that of Eukaryotic translation initiation factor 1A (tif11) from Schizosaccharomyces pombe (strain 972 / ATCC 24843) (Fission yeast).